A 218-amino-acid chain; its full sequence is Thiamine-phosphate synthase (218 aa).

4-amino-2-methyl-5-(diphosphooxymethyl)pyrimidine-binding positions include Gln43–Lys47 and Asn75. The Mg(2+) site is built by Asp76 and Asp95. Position 114 (Thr114) interacts with 4-amino-2-methyl-5-(diphosphooxymethyl)pyrimidine. Thr140–Thr142 contributes to the 2-[(2R,5Z)-2-carboxy-4-methylthiazol-5(2H)-ylidene]ethyl phosphate binding site. A 4-amino-2-methyl-5-(diphosphooxymethyl)pyrimidine-binding site is contributed by Lys143. 2-[(2R,5Z)-2-carboxy-4-methylthiazol-5(2H)-ylidene]ethyl phosphate contacts are provided by residues Gly171 and Val191–Ser192.

It belongs to the thiamine-phosphate synthase family. The cofactor is Mg(2+).

The catalysed reaction is 2-[(2R,5Z)-2-carboxy-4-methylthiazol-5(2H)-ylidene]ethyl phosphate + 4-amino-2-methyl-5-(diphosphooxymethyl)pyrimidine + 2 H(+) = thiamine phosphate + CO2 + diphosphate. It carries out the reaction 2-(2-carboxy-4-methylthiazol-5-yl)ethyl phosphate + 4-amino-2-methyl-5-(diphosphooxymethyl)pyrimidine + 2 H(+) = thiamine phosphate + CO2 + diphosphate. The enzyme catalyses 4-methyl-5-(2-phosphooxyethyl)-thiazole + 4-amino-2-methyl-5-(diphosphooxymethyl)pyrimidine + H(+) = thiamine phosphate + diphosphate. It participates in cofactor biosynthesis; thiamine diphosphate biosynthesis; thiamine phosphate from 4-amino-2-methyl-5-diphosphomethylpyrimidine and 4-methyl-5-(2-phosphoethyl)-thiazole: step 1/1. In terms of biological role, condenses 4-methyl-5-(beta-hydroxyethyl)thiazole monophosphate (THZ-P) and 2-methyl-4-amino-5-hydroxymethyl pyrimidine pyrophosphate (HMP-PP) to form thiamine monophosphate (TMP). The protein is Thiamine-phosphate synthase of Myxococcus xanthus (strain DK1622).